The sequence spans 299 residues: Taste receptor type 2 member 1 (299 aa).

The Extracellular segment spans residues 1–9 (MLESHLIIY). The chain crosses the membrane as a helical span at residues 10 to 30 (FLLAVIQFLLGTFTNGIIVVV). Residues 31–55 (NGIDLIKHRKMAPLDLLLSCLAVSR) lie on the Cytoplasmic side of the membrane. A helical membrane pass occupies residues 56–76 (IFLQLFIFYINVVVIFLIEFI). Residues 77-81 (TCSAS) are Extracellular-facing. Residues 82–102 (CAFLVFVNELELWLATWLGVF) traverse the membrane as a helical segment. The Cytoplasmic portion of the chain corresponds to 103–124 (YCAKVASVLHPLFIWLKMRISK). The helical transmembrane segment at 125-145 (SVPWMILGSLLYVSMICIFHI) threads the bilayer. At 146 to 178 (KYTGFMVPYFLRNLFFQNATIQTEVKQAIQIFS) the chain is on the extracellular side. N163 carries an N-linked (GlcNAc...) asparagine glycan. A helical membrane pass occupies residues 179 to 199 (FVAELLVPLLIFLVAVLLLIF). Over 200–222 (SLGRHTRQMRNTVAGSRVPGRGA) the chain is Cytoplasmic. A helical membrane pass occupies residues 223-243 (HISALLSILSFLILYISHYLI). Residues 244–257 (KTFLSSLKFHVKRF) are Extracellular-facing. A helical membrane pass occupies residues 258–278 (VFLFCILVIGTYPSGHSLILI). At 279–299 (LGNPKLKQNTKKFLCHSKCCQ) the chain is on the cytoplasmic side.

It belongs to the G-protein coupled receptor T2R family.

Its subcellular location is the membrane. Receptor that may play a role in the perception of bitterness and is gustducin-linked. May play a role in sensing the chemical composition of the gastrointestinal content. The activity of this receptor may stimulate alpha gustducin, mediate PLC-beta-2 activation and lead to the gating of TRPM5. The protein is Taste receptor type 2 member 1 (TAS2R1) of Chlorocebus aethiops (Green monkey).